We begin with the raw amino-acid sequence, 334 residues long: Leucine-rich repeat-containing protein 39 (334 aa).

LRR repeat units follow at residues 59-82 (EDGR…LLKL), 83-105 (NQLQ…IGRF), 106-128 (QHLI…IGLL), 129-151 (TRLQ…LSNC), 153-175 (SLEK…LSKL), 176-198 (LKLT…VLDM), 199-221 (PALE…LDRM), 223-244 (SLHT…IRNM), 245-269 (KNLG…EMTS), and 272-295 (FVNF…VDGE).

In terms of assembly, interacts with MYH7 (via C-terminus). As to expression, expressed in heart and skeletal muscle (at protein level). Also detected in kidney (at protein level). Not detected in other tissues tested (at protein level).

It is found in the cytoplasm. Its subcellular location is the myofibril. The protein resides in the sarcomere. It localises to the m line. Functionally, component of the sarcomeric M-band which plays a role in myocyte response to biomechanical stress. May regulate expression of other M-band proteins via an SRF-dependent pathway. Important for normal contractile function in heart. The protein is Leucine-rich repeat-containing protein 39 of Rattus norvegicus (Rat).